We begin with the raw amino-acid sequence, 356 residues long: 1-deoxy-D-xylulose 5-phosphate reductoisomerase (356 aa).

NADPH-binding residues include Thr7, Gly8, Ser9, Ile10, Gly31, Asn33, and Asn111. Lys112 contacts 1-deoxy-D-xylulose 5-phosphate. Glu113 is a binding site for NADPH. Asp131 serves as a coordination point for Mn(2+). Residues Ser132, Glu133, Ser155, and His178 each contribute to the 1-deoxy-D-xylulose 5-phosphate site. Glu133 contacts Mn(2+). NADPH is bound at residue Gly184. Residues Ser191, Asn196, Lys197, and Glu200 each coordinate 1-deoxy-D-xylulose 5-phosphate. Glu200 is a binding site for Mn(2+).

Belongs to the DXR family. Mg(2+) serves as cofactor. Requires Mn(2+) as cofactor.

It catalyses the reaction 2-C-methyl-D-erythritol 4-phosphate + NADP(+) = 1-deoxy-D-xylulose 5-phosphate + NADPH + H(+). It participates in isoprenoid biosynthesis; isopentenyl diphosphate biosynthesis via DXP pathway; isopentenyl diphosphate from 1-deoxy-D-xylulose 5-phosphate: step 1/6. In terms of biological role, catalyzes the NADPH-dependent rearrangement and reduction of 1-deoxy-D-xylulose-5-phosphate (DXP) to 2-C-methyl-D-erythritol 4-phosphate (MEP). This chain is 1-deoxy-D-xylulose 5-phosphate reductoisomerase, found in Campylobacter jejuni subsp. doylei (strain ATCC BAA-1458 / RM4099 / 269.97).